The chain runs to 62 residues: Large ribosomal subunit protein uL30 (62 aa).

Belongs to the universal ribosomal protein uL30 family. Part of the 50S ribosomal subunit.

The sequence is that of Large ribosomal subunit protein uL30 from Geobacillus kaustophilus (strain HTA426).